Here is a 331-residue protein sequence, read N- to C-terminus: tRNA-cytidine(32) 2-sulfurtransferase (331 aa).

The interval 1 to 33 (MNAPHMNDTAADAATLDDAAAPAGRPALTRREQ) is disordered. The segment covering 8–23 (DTAADAATLDDAAAPA) has biased composition (low complexity). Residues 71 to 76 (SGGKDS) carry the PP-loop motif motif. Residues Cys-146, Cys-149, and Cys-237 each contribute to the [4Fe-4S] cluster site.

This sequence belongs to the TtcA family. Homodimer. Mg(2+) serves as cofactor. It depends on [4Fe-4S] cluster as a cofactor.

It localises to the cytoplasm. It catalyses the reaction cytidine(32) in tRNA + S-sulfanyl-L-cysteinyl-[cysteine desulfurase] + AH2 + ATP = 2-thiocytidine(32) in tRNA + L-cysteinyl-[cysteine desulfurase] + A + AMP + diphosphate + H(+). It participates in tRNA modification. Functionally, catalyzes the ATP-dependent 2-thiolation of cytidine in position 32 of tRNA, to form 2-thiocytidine (s(2)C32). The sulfur atoms are provided by the cysteine/cysteine desulfurase (IscS) system. This chain is tRNA-cytidine(32) 2-sulfurtransferase, found in Burkholderia orbicola (strain MC0-3).